Reading from the N-terminus, the 138-residue chain is Large ribosomal subunit protein uL16 (138 aa).

The protein belongs to the universal ribosomal protein uL16 family. Part of the 50S ribosomal subunit.

Its function is as follows. Binds 23S rRNA and is also seen to make contacts with the A and possibly P site tRNAs. The protein is Large ribosomal subunit protein uL16 of Anaeromyxobacter dehalogenans (strain 2CP-1 / ATCC BAA-258).